The primary structure comprises 582 residues: GPI-anchor transamidase component PIGT (582 aa).

Positions 1 to 25 (MAAAMPLGLPLRLLVLLLVGRGCCG) are cleaved as a signal peptide. The Lumenal portion of the chain corresponds to 26-529 (CAEGPRDSLR…NLPTPDFSMP (504 aa)). A glycan (N-linked (GlcNAc...) asparagine) is linked at N168. Intrachain disulfides connect C199-C276 and C230-C235. N295 and N331 each carry an N-linked (GlcNAc...) asparagine glycan. Positions 465, 525, 527, and 531 each coordinate a 2-acyl-6-[6-phosphoethanolamine-alpha-D-mannosyl-(1-&gt;2)-6-phosphoethanolamine-alpha-D-mannosyl-(1-&gt;6)-2-phosphoethanolamine-alpha-D-mannosyl-(1-&gt;4)-alpha-D-glucosaminyl]-1-(1-radyl,2-acyl-sn-glycero-3-phospho)-1D-myo-inositol. A helical membrane pass occupies residues 530 to 552 (YNVICLTCTVVAVCYGSFYNLLT). Topologically, residues 553–582 (RTFHIEEPKSGGLAKRLANLIRRARGVPPL) are cytoplasmic.

The protein belongs to the PIGT family. As to quaternary structure, heteropentamer. Part of the GPI-anchor transamidase complex, consisting of PIGK, PIGT, PIGS, PIGU and GAA1. Post-translationally, the disulfide bond between PIGK/GPI8 and PIGT is important for normal enzyme activity.

The protein localises to the endoplasmic reticulum membrane. It functions in the pathway glycolipid biosynthesis; glycosylphosphatidylinositol-anchor biosynthesis. Component of the glycosylphosphatidylinositol-anchor (GPI-anchor) transamidase (GPI-T) complex that catalyzes the formation of the linkage between a proprotein and a GPI-anchor and participates in GPI anchored protein biosynthesis. May play a crucial role in GPI-T complex assembly in the luminal layer. Binds GPI-anchor. This chain is GPI-anchor transamidase component PIGT, found in Mus musculus (Mouse).